Here is a 728-residue protein sequence, read N- to C-terminus: Catalase-peroxidase 1 (728 aa).

A signal peptide spans 1–22 (MDKTQSSQGKCPVMHGANSAVA). A cross-link (tryptophyl-tyrosyl-methioninium (Trp-Tyr) (with M-251)) is located at residues 97–225 (WHSAGTYRVA…LAAVMMGLIY (129 aa)). The active-site Proton acceptor is histidine 98. The segment at residues 225–251 (YVNPEGVDGKPDPLRTAQDVRVTFARM) is a cross-link (tryptophyl-tyrosyl-methioninium (Tyr-Met) (with W-97)). Histidine 266 contributes to the heme b binding site.

Belongs to the peroxidase family. Peroxidase/catalase subfamily. Homodimer or homotetramer. It depends on heme b as a cofactor. Post-translationally, formation of the three residue Trp-Tyr-Met cross-link is important for the catalase, but not the peroxidase activity of the enzyme.

It catalyses the reaction H2O2 + AH2 = A + 2 H2O. The enzyme catalyses 2 H2O2 = O2 + 2 H2O. Functionally, bifunctional enzyme with both catalase and broad-spectrum peroxidase activity. The sequence is that of Catalase-peroxidase 1 from Shewanella sp. (strain ANA-3).